We begin with the raw amino-acid sequence, 156 residues long: Cyanate hydratase (156 aa).

Residues R96, E99, and S122 contribute to the active site.

Belongs to the cyanase family.

It carries out the reaction cyanate + hydrogencarbonate + 3 H(+) = NH4(+) + 2 CO2. Catalyzes the reaction of cyanate with bicarbonate to produce ammonia and carbon dioxide. The sequence is that of Cyanate hydratase from Serratia proteamaculans (strain 568).